Here is an 88-residue protein sequence, read N- to C-terminus: Small ribosomal subunit protein bS20 (88 aa).

The segment covering 1–12 (MANHKSALKRAK) has biased composition (basic residues). Positions 1–23 (MANHKSALKRAKQNTIKQMRNRS) are disordered.

The protein belongs to the bacterial ribosomal protein bS20 family.

Its function is as follows. Binds directly to 16S ribosomal RNA. This chain is Small ribosomal subunit protein bS20, found in Desulfatibacillum aliphaticivorans.